The following is a 305-amino-acid chain: tRNA N6-adenosine threonylcarbamoyltransferase (305 aa).

Positions 108 and 112 each coordinate Fe cation. Substrate contacts are provided by residues 130–134, D163, G176, D180, and N264; that span reads VVSGG. D288 serves as a coordination point for Fe cation.

The protein belongs to the KAE1 / TsaD family. Fe(2+) serves as cofactor.

It localises to the cytoplasm. The catalysed reaction is L-threonylcarbamoyladenylate + adenosine(37) in tRNA = N(6)-L-threonylcarbamoyladenosine(37) in tRNA + AMP + H(+). In terms of biological role, required for the formation of a threonylcarbamoyl group on adenosine at position 37 (t(6)A37) in tRNAs that read codons beginning with adenine. Is involved in the transfer of the threonylcarbamoyl moiety of threonylcarbamoyl-AMP (TC-AMP) to the N6 group of A37, together with TsaE and TsaB. TsaD likely plays a direct catalytic role in this reaction. In Mycoplasma mobile (strain ATCC 43663 / 163K / NCTC 11711) (Mesomycoplasma mobile), this protein is tRNA N6-adenosine threonylcarbamoyltransferase.